Consider the following 329-residue polypeptide: Ribosomal protein L11 methyltransferase (329 aa).

The S-adenosyl-L-methionine site is built by threonine 177, glycine 198, aspartate 220, and asparagine 264.

It belongs to the methyltransferase superfamily. PrmA family.

The protein localises to the cytoplasm. It catalyses the reaction L-lysyl-[protein] + 3 S-adenosyl-L-methionine = N(6),N(6),N(6)-trimethyl-L-lysyl-[protein] + 3 S-adenosyl-L-homocysteine + 3 H(+). In terms of biological role, methylates ribosomal protein L11. The chain is Ribosomal protein L11 methyltransferase from Helicobacter pylori (strain J99 / ATCC 700824) (Campylobacter pylori J99).